Reading from the N-terminus, the 20-residue chain is Protein C activator (20 aa).

The 20-residue stretch at Val1–Ala20 folds into the Peptidase S1 domain.

Belongs to the peptidase S1 family. Snake venom subfamily. In terms of assembly, monomer. Glycosylated. Expressed by the venom gland.

It is found in the secreted. With respect to regulation, inhibited by calcium. In terms of biological role, snake venom serine protease that selectively cleaves the heavy chain of protein C (PROC). This activation is thrombomodulin-independent. This chain is Protein C activator, found in Agkistrodon bilineatus (Cantil).